A 502-amino-acid polypeptide reads, in one-letter code: UDP-glucuronosyltransferase 2C1 (502 aa).

2 N-linked (GlcNAc...) asparagine glycosylation sites follow: N177 and N288. Residues 466–481 (VVVFLLTCVATIIFLA) traverse the membrane as a helical segment.

This sequence belongs to the UDP-glycosyltransferase family.

Its subcellular location is the microsome membrane. It is found in the endoplasmic reticulum membrane. The enzyme catalyses glucuronate acceptor + UDP-alpha-D-glucuronate = acceptor beta-D-glucuronoside + UDP + H(+). Functionally, UDPGT is of major importance in the conjugation and subsequent elimination of potentially toxic xenobiotics and endogenous compounds. The chain is UDP-glucuronosyltransferase 2C1 (UGT2C1) from Oryctolagus cuniculus (Rabbit).